A 258-amino-acid chain; its full sequence is Apolipoprotein E (258 aa).

The first 19 residues, 1–19 (MRVWTVLLGAVLLLAACQA), serve as a signal peptide directing secretion. Tandem repeats lie at residues 112–133 (VDME…QVAG), 134–155 (QNLE…KRLA), and 156–173 (KDTE…KEAT). The 3 X 22 AA approximate tandem repeats stretch occupies residues 112–173 (VDMEEAKTRV…KLEAYSKEAT (62 aa)).

It belongs to the apolipoprotein A1/A4/E family. As to quaternary structure, homotetramer.

The protein localises to the secreted. Its subcellular location is the extracellular space. It is found in the extracellular matrix. APOE is an apolipoprotein, a protein associating with lipid particles, that mainly functions in lipoprotein-mediated lipid transport between organs via the plasma and interstitial fluids. APOE is a core component of plasma lipoproteins and is involved in their production, conversion and clearance. Apolipoproteins are amphipathic molecules that interact both with lipids of the lipoprotein particle core and the aqueous environment of the plasma. The sequence is that of Apolipoprotein E (APOE) from Alligator mississippiensis (American alligator).